Reading from the N-terminus, the 277-residue chain is 3-methyl-2-oxobutanoate hydroxymethyltransferase (277 aa).

Mg(2+) is bound by residues Asp-43 and Asp-82. 3-methyl-2-oxobutanoate is bound by residues 43–44 (DS), Asp-82, and Lys-112. Glu-114 contacts Mg(2+). Glu-181 (proton acceptor) is an active-site residue.

Belongs to the PanB family. Homodecamer; pentamer of dimers. Mg(2+) is required as a cofactor.

It is found in the cytoplasm. The enzyme catalyses 3-methyl-2-oxobutanoate + (6R)-5,10-methylene-5,6,7,8-tetrahydrofolate + H2O = 2-dehydropantoate + (6S)-5,6,7,8-tetrahydrofolate. It participates in cofactor biosynthesis; (R)-pantothenate biosynthesis; (R)-pantoate from 3-methyl-2-oxobutanoate: step 1/2. In terms of biological role, catalyzes the reversible reaction in which hydroxymethyl group from 5,10-methylenetetrahydrofolate is transferred onto alpha-ketoisovalerate to form ketopantoate. This chain is 3-methyl-2-oxobutanoate hydroxymethyltransferase, found in Listeria monocytogenes serotype 4a (strain HCC23).